The chain runs to 101 residues: Thylakoid-associated protein slr0729 (101 aa).

It localises to the cellular thylakoid membrane. The sequence is that of Thylakoid-associated protein slr0729 from Synechocystis sp. (strain ATCC 27184 / PCC 6803 / Kazusa).